Consider the following 707-residue polypeptide: Heat shock protein hsp88 (707 aa).

Over residues 662 to 692 (EAEKAAKKAEEEARKAKEAAEKAAQEGAKDD) the composition is skewed to basic and acidic residues. Positions 662–707 (EAEKAAKKAEEEARKAKEAAEKAAQEGAKDDEMTDADAPKPVVEEA) are disordered.

This sequence belongs to the heat shock protein 70 family. As to quaternary structure, binds hsp30 independent of temperature or substrate. In terms of processing, the N-terminus is blocked.

It is found in the cytoplasm. The sequence is that of Heat shock protein hsp88 (hsp88) from Neurospora crassa (strain ATCC 24698 / 74-OR23-1A / CBS 708.71 / DSM 1257 / FGSC 987).